The primary structure comprises 407 residues: Chorismate synthase (407 aa).

Positions 40 and 46 each coordinate NADP(+). FMN contacts are provided by residues 138–140 (RAS) and 259–260 (QA). The span at 275–284 (RRGSRAHDEM) shows a compositional bias: basic and acidic residues. Residues 275–308 (RRGSRAHDEMYPGTDGVVRSTNRAGGLEGGMTNG) are disordered. Residues Gly-303, 318–322 (KPIST), and Arg-344 contribute to the FMN site.

Belongs to the chorismate synthase family. In terms of assembly, homotetramer. FMNH2 serves as cofactor.

The catalysed reaction is 5-O-(1-carboxyvinyl)-3-phosphoshikimate = chorismate + phosphate. Its pathway is metabolic intermediate biosynthesis; chorismate biosynthesis; chorismate from D-erythrose 4-phosphate and phosphoenolpyruvate: step 7/7. Functionally, catalyzes the anti-1,4-elimination of the C-3 phosphate and the C-6 proR hydrogen from 5-enolpyruvylshikimate-3-phosphate (EPSP) to yield chorismate, which is the branch point compound that serves as the starting substrate for the three terminal pathways of aromatic amino acid biosynthesis. This reaction introduces a second double bond into the aromatic ring system. This is Chorismate synthase from Mycobacterium ulcerans (strain Agy99).